A 598-amino-acid chain; its full sequence is NADH-quinone oxidoreductase subunit C/D (598 aa).

Residues 1–189 (MTDLTTSDST…DPFVLTKQKE (189 aa)) form an NADH dehydrogenase I subunit C region. Residues 213–598 (DFMFLNLGPN…IDFVMSDVDR (386 aa)) form an NADH dehydrogenase I subunit D region.

It in the N-terminal section; belongs to the complex I 30 kDa subunit family. The protein in the C-terminal section; belongs to the complex I 49 kDa subunit family. In terms of assembly, NDH-1 is composed of 13 different subunits. Subunits NuoB, CD, E, F, and G constitute the peripheral sector of the complex.

The protein localises to the cell inner membrane. The catalysed reaction is a quinone + NADH + 5 H(+)(in) = a quinol + NAD(+) + 4 H(+)(out). NDH-1 shuttles electrons from NADH, via FMN and iron-sulfur (Fe-S) centers, to quinones in the respiratory chain. The immediate electron acceptor for the enzyme in this species is believed to be ubiquinone. Couples the redox reaction to proton translocation (for every two electrons transferred, four hydrogen ions are translocated across the cytoplasmic membrane), and thus conserves the redox energy in a proton gradient. In Yersinia enterocolitica serotype O:8 / biotype 1B (strain NCTC 13174 / 8081), this protein is NADH-quinone oxidoreductase subunit C/D.